Here is an 870-residue protein sequence, read N- to C-terminus: LPS-assembly protein LptD (870 aa).

The N-terminal stretch at methionine 1 to alanine 25 is a signal peptide.

This sequence belongs to the LptD family. Component of the lipopolysaccharide transport and assembly complex. Interacts with LptE and LptA.

It localises to the cell outer membrane. Functionally, together with LptE, is involved in the assembly of lipopolysaccharide (LPS) at the surface of the outer membrane. This Coxiella burnetii (strain RSA 493 / Nine Mile phase I) protein is LPS-assembly protein LptD.